The following is a 1209-amino-acid chain: MMELPLCGRGLILSLIFLLLKLSAAEIPLSVQQVPTIVKQSYVQVAFPFDEYFQIECEAKGNPEPIFSWTKDDKPFDLSDPRIIAANNSGTFKIPNEGHISHFQGKYRCFASNRLGTAVSEEIEFIVPGVPKFPKEKIEPIDVEEGDSIVLPCNPPKGLPPLHIYWMNIELEHIEQDERVYMSQRGDLYFANVEENDSRNDYCCFAAFPKLRTIVQKMPMKLTVNSSNSIKQRKPKLLLPPAQMGSLSAKTVLKGDTLLLECFAEGLPTPHIQWSKPGSELPEGRATIEVHEKTLKIENISYQDRGNYRCTANNLLGKASHDFHVTVEEPPRWKKKPQSAVYSTGSSGILLCEAEGEPQPTIKWRLNGLPIEKHPFPGDFMFPREISFTNLLPNHTGVYQCEASNIHGTILANANIDVIDVIPLIKTKNEENYATVVGYSAFLHCEYFASPKATVVWEVADETHPLEGDRYHTHENGTLEIYRTTEEDAGSYSCWVDNAMGKAVITANLDIRNATKLRVSPKNPRIPKSHVLELYCESQCDSHLKHSLKLSWSKDGEAFEMNGTEDGRIVIDGAYLTISNITAEDQGVYSCSAQTSLDSTSEKTQVTVLGVPDPPGNLHLSERQNRSVRLSWEAGDDHNSKISEYIVEFEGNREEPGKWEELTRVQGEETDVVLSLAPYVRYQFRVTAVNEVGRSHASLPSDHHETPPAAPDKNPQNIRVQASQPKEMIIKWEPLKSMEQNGPGLEYKVSWKPQGAPEEWEEEIVTNHTLRVMTPTVYAPYDVKVQAINQLGSSPDPQPVTLYSGEDYPSTAPVIQRVDVMNSTLVKVTWSSIPKETVHGLLRGYQINWWKTKSLLDGRTHPKEVNILRFSGQRNSGMVPSLDPFSEFHLTVLAYNSKGAGPESEPYIFQTPEGVPEQPSFLKVIKVDKDTATLSWGLPKKLNGNLTGYLLQYQIINDTYELGELNEINVTTPSKSSWHLSNLNSTTKYKFYLRACTSRGCGKPISEEGATLGEGSKGIRKITEGVNVTQKIHPVEVLVPGAEHIVHLMTKNWGDNDSIFQDVIETRGREYAGLYDDISTQGWFIGLMCAIALLTLILLTICFVKRNRGGKYSVKEKEDLHPDPEVQSAKDETFGEYSDSDEKPLKGSLRSLNRNMQPTESADSLVEYGEGDQSIFNEDGSFIGAYTGAKEKGSVESNGSSTATFPLRA.

Positions 1 to 25 are cleaved as a signal peptide; the sequence is MMELPLCGRGLILSLIFLLLKLSAA. Residues 26 to 1083 lie on the Extracellular side of the membrane; the sequence is EIPLSVQQVP…LYDDISTQGW (1058 aa). 2 consecutive Ig-like C2-type domains span residues 35-124 and 128-223; these read PTIV…EEIE and PGVP…MKLT. Intrachain disulfides connect C57-C109 and C153-C204. An N-linked (GlcNAc...) asparagine glycan is attached at N87. N-linked (GlcNAc...) asparagine glycans are attached at residues N225 and N299. 4 Ig-like C2-type domains span residues 235-328, 331-417, 423-510, and 515-607; these read PKLL…VTVE, PRWK…ANID, PLIK…ANLD, and TKLR…TQVT. Intrachain disulfides connect C262/C310, C352/C401, C445/C494, and C536/C591. N476 is a glycosylation site (N-linked (GlcNAc...) asparagine). A DGEA motif is present at residues 555-558; sequence DGEA. N562 and N580 each carry an N-linked (GlcNAc...) asparagine glycan. Fibronectin type-III domains follow at residues 614–709, 714–807, 812–914, and 918–1015; these read PPGN…TPPA, NPQN…SGED, APVI…TPEG, and QPSF…LGEG. Residues 696–717 form a disordered region; it reads HASLPSDHHETPPAAPDKNPQN. 4 N-linked (GlcNAc...) asparagine glycosylation sites follow: N767, N822, N945, and N1027. Residues 1084–1104 form a helical membrane-spanning segment; the sequence is FIGLMCAIALLTLILLTICFV. At 1105–1209 the chain is on the cytoplasmic side; it reads KRNRGGKYSV…SSTATFPLRA (105 aa). Residues 1115–1133 show a composition bias toward basic and acidic residues; the sequence is KEKEDLHPDPEVQSAKDET. The tract at residues 1115–1170 is disordered; that stretch reads KEKEDLHPDPEVQSAKDETFGEYSDSDEKPLKGSLRSLNRNMQPTESADSLVEYGE. 3 positions are modified to phosphoserine: S1148, S1161, and S1181. Over residues 1150-1162 the composition is skewed to polar residues; the sequence is RSLNRNMQPTESA. The short motif at 1182-1186 is the FIG[AQ]Y element; it reads FIGAY.

It belongs to the immunoglobulin superfamily. L1/neurofascin/NgCAM family. In terms of assembly, may interact with L1CAM. May interact with ITGB1/ITGA1 heterodimer and ITGB1/ITGA2 heterodimer as well as with ANK3. Post-translationally, cleavage by metalloprotease ADAM8 in the extracellular part generates 2 soluble forms (125 kDa and 165 kDa) in vitro and is inhibited by metalloprotease inhibitors. In brain extracts, these two soluble forms are also present and are dramatically reduced in mice lacking ADAM8. Cleaved by BACE1. N-glycosylated. Contains N-linked oligosaccharides with a sulfated carbohydrate structure type HNK-1 (SO4-3-GlcUABeta1,3GalBeta1,4GlcNAc). In terms of processing, O-glycosylated. Expressed in the brain, in the cerebellum and in the spinal cord. Detected in the retina and the optic nerve. Expressed in neurons and glial cells in the central nervous system and by Schwann cells in the peripheral nervous system.

It is found in the cell membrane. The protein localises to the secreted. Its subcellular location is the extracellular space. The protein resides in the extracellular matrix. Functionally, extracellular matrix and cell adhesion protein that plays a role in nervous system development and in synaptic plasticity. Both soluble and membranous forms promote neurite outgrowth of cerebellar and hippocampal neurons and suppress neuronal cell death. Plays a role in neuronal positioning of pyramidal neurons as well as in regulation of both the number of interneurons and the efficacy of GABAergic synapses. May play a role in regulating cell migration in nerve regeneration and cortical development. Potentiates integrin-dependent cell migration towards extracellular matrix proteins. Recruits ANK3 to the plasma membrane. The protein is Neural cell adhesion molecule L1-like protein (Chl1) of Mus musculus (Mouse).